A 251-amino-acid chain; its full sequence is Isoprenyl transferase (251 aa).

Asp24 is a catalytic residue. A Mg(2+)-binding site is contributed by Asp24. Substrate-binding positions include 25 to 28, Trp29, Arg37, His41, and 69 to 71; these read GNGR and STE. Asn72 acts as the Proton acceptor in catalysis. Substrate contacts are provided by residues Trp73, Arg75, Arg186, and 192–194; that span reads RIS. Residue Glu205 participates in Mg(2+) binding.

This sequence belongs to the UPP synthase family. In terms of assembly, homodimer. Mg(2+) serves as cofactor.

In terms of biological role, catalyzes the condensation of isopentenyl diphosphate (IPP) with allylic pyrophosphates generating different type of terpenoids. This is Isoprenyl transferase from Chromobacterium violaceum (strain ATCC 12472 / DSM 30191 / JCM 1249 / CCUG 213 / NBRC 12614 / NCIMB 9131 / NCTC 9757 / MK).